Consider the following 438-residue polypeptide: Enolase (438 aa).

Residues His-159 and Glu-168 each contribute to the substrate site. Glu-211 acts as the Proton donor in catalysis. The Mg(2+) site is built by Asp-246, Glu-297, and Asp-322. Substrate is bound by residues Glu-297 and Asp-322. The active-site Proton acceptor is Lys-347. Residues 374 to 377 (SHRS) and Lys-398 contribute to the substrate site.

It belongs to the enolase family. As to quaternary structure, homodimer. It depends on Mg(2+) as a cofactor.

Its subcellular location is the cytoplasm. The catalysed reaction is (2R)-2-phosphoglycerate = phosphoenolpyruvate + H2O. The protein operates within carbohydrate degradation; glycolysis; pyruvate from D-glyceraldehyde 3-phosphate: step 4/5. The chain is Enolase (emp-7) from Neurospora crassa (strain ATCC 24698 / 74-OR23-1A / CBS 708.71 / DSM 1257 / FGSC 987).